The sequence spans 689 residues: Glycine--tRNA ligase beta subunit (689 aa).

Belongs to the class-II aminoacyl-tRNA synthetase family. As to quaternary structure, tetramer of two alpha and two beta subunits.

It is found in the cytoplasm. The catalysed reaction is tRNA(Gly) + glycine + ATP = glycyl-tRNA(Gly) + AMP + diphosphate. The sequence is that of Glycine--tRNA ligase beta subunit (glyS) from Pasteurella multocida (strain Pm70).